The sequence spans 434 residues: UPF0053 protein YrkA (434 aa).

One can recognise a CNNM transmembrane domain in the interval 1–201; the sequence is MTTINLIIFT…YKSGEINQNE (201 aa). 3 consecutive transmembrane segments (helical) span residues 7–27, 64–84, and 101–121; these read IIFT…FAIV, LGIT…FEVI, and VLIL…VGEL. 2 consecutive CBS domains span residues 220-282 and 289-346; these read MIPR…KIKE and HINP…IRDE.

The protein belongs to the UPF0053 family.

It localises to the cell membrane. This Bacillus subtilis (strain 168) protein is UPF0053 protein YrkA (yrkA).